We begin with the raw amino-acid sequence, 715 residues long: Polyribonucleotide nucleotidyltransferase (715 aa).

The Mg(2+) site is built by Asp-489 and Asp-495. The 60-residue stretch at 556–615 folds into the KH domain; it reads PRIETLRIPTEKIREVIGTGGKVIREICEKTGAKINIEDDGTVKVASSDGNSIKAAINWI. The 69-residue stretch at 625-693 folds into the S1 motif domain; sequence GHIYDGTVVK…DRGKVRLSMR (69 aa).

The protein belongs to the polyribonucleotide nucleotidyltransferase family. Mg(2+) serves as cofactor.

The protein resides in the cytoplasm. The catalysed reaction is RNA(n+1) + phosphate = RNA(n) + a ribonucleoside 5'-diphosphate. Functionally, involved in mRNA degradation. Catalyzes the phosphorolysis of single-stranded polyribonucleotides processively in the 3'- to 5'-direction. The protein is Polyribonucleotide nucleotidyltransferase of Beijerinckia indica subsp. indica (strain ATCC 9039 / DSM 1715 / NCIMB 8712).